A 194-amino-acid chain; its full sequence is Ion-translocating oxidoreductase complex subunit B (194 aa).

The interval Met1–Ser26 is hydrophobic. In terms of domain architecture, 4Fe-4S spans Glu32 to Val90. Residues Cys49, Cys52, Cys57, Cys73, Cys114, Cys117, Cys120, Cys124, Cys144, Cys147, Cys150, and Cys154 each contribute to the [4Fe-4S] cluster site. 4Fe-4S ferredoxin-type domains follow at residues Lys105–Lys134 and Ala135–Val164.

The protein belongs to the 4Fe4S bacterial-type ferredoxin family. RnfB subfamily. The complex is composed of six subunits: RnfA, RnfB, RnfC, RnfD, RnfE and RnfG. [4Fe-4S] cluster serves as cofactor.

It is found in the cell inner membrane. Functionally, part of a membrane-bound complex that couples electron transfer with translocation of ions across the membrane. The protein is Ion-translocating oxidoreductase complex subunit B of Aliivibrio fischeri (strain ATCC 700601 / ES114) (Vibrio fischeri).